The primary structure comprises 578 residues: Acyl-coenzyme A synthetase ACSM5, mitochondrial (578 aa).

The N-terminal 22 residues, 1–22 (MRLWLRGLVYQARRSSWGVFRI), are a transit peptide targeting the mitochondrion. Lysine 96 carries the N6-acetyllysine; alternate modification. An N6-succinyllysine; alternate modification is found at lysine 96. Lysine 151 bears the N6-acetyllysine mark. 229–237 (TSGTTGTPK) serves as a coordination point for ATP. N6-acetyllysine is present on lysine 335. ATP-binding positions include 367–372 (EGYGQS), aspartate 454, arginine 469, and lysine 565.

It belongs to the ATP-dependent AMP-binding enzyme family. Mg(2+) serves as cofactor. Mn(2+) is required as a cofactor.

It is found in the mitochondrion matrix. It carries out the reaction a medium-chain fatty acid + ATP + CoA = a medium-chain fatty acyl-CoA + AMP + diphosphate. In terms of biological role, catalyzes the activation of fatty acids by CoA to produce an acyl-CoA, the first step in fatty acid metabolism. This is Acyl-coenzyme A synthetase ACSM5, mitochondrial (Acsm5) from Rattus norvegicus (Rat).